A 225-amino-acid polypeptide reads, in one-letter code: 2-C-methyl-D-erythritol 4-phosphate cytidylyltransferase (225 aa).

This sequence belongs to the IspD/TarI cytidylyltransferase family. IspD subfamily.

The enzyme catalyses 2-C-methyl-D-erythritol 4-phosphate + CTP + H(+) = 4-CDP-2-C-methyl-D-erythritol + diphosphate. It participates in isoprenoid biosynthesis; isopentenyl diphosphate biosynthesis via DXP pathway; isopentenyl diphosphate from 1-deoxy-D-xylulose 5-phosphate: step 2/6. In terms of biological role, catalyzes the formation of 4-diphosphocytidyl-2-C-methyl-D-erythritol from CTP and 2-C-methyl-D-erythritol 4-phosphate (MEP). This is 2-C-methyl-D-erythritol 4-phosphate cytidylyltransferase from Prochlorococcus marinus (strain NATL2A).